We begin with the raw amino-acid sequence, 948 residues long: Sensor histidine kinase RcsC (948 aa).

Residues 1-20 (MKYLASFRTTLKVSRYLFRA) are Cytoplasmic-facing. The chain crosses the membrane as a helical span at residues 21–41 (LALLIWLLIAFVSVFYIVNAL). Residues 42 to 313 (HQRESEIRQE…PVDLVLERIR (272 aa)) are Periplasmic-facing. The helical transmembrane segment at 314–334 (ILILNAILLNVLVGAGLFTLA) threads the bilayer. Topologically, residues 335-948 (RMYERRIFIP…YAERVRKTRA (614 aa)) are cytoplasmic. The region spanning 357-425 (QFNRKIVASA…VLTSNNTNLQ (69 aa)) is the PAS domain. One can recognise a Histidine kinase domain in the interval 476–692 (TVSHELRTPL…QFTLRIPLYG (217 aa)). His-479 bears the Phosphohistidine; by autocatalysis mark. Residues 705 to 805 (AGTCCWLAVR…ARIYSIELDS (101 aa)) form the ABL domain. In terms of domain architecture, Response regulatory spans 826–940 (MILVVDDHPI…VLKQTLAVYA (115 aa)). A 4-aspartylphosphate modification is found at Asp-875.

It belongs to the RcsC family. As to quaternary structure, interacts with RcsD. Autophosphorylated. Activation probably requires a transfer of a phosphate group from a His in the transmitter domain to an Asp in the receiver domain.

It localises to the cell inner membrane. The enzyme catalyses ATP + protein L-histidine = ADP + protein N-phospho-L-histidine.. Component of the Rcs signaling system, which controls transcription of numerous genes. RcsC functions as a membrane-associated protein kinase that phosphorylates RcsD in response to environmental signals. The phosphoryl group is then transferred to the response regulator RcsB. This Salmonella typhimurium (strain LT2 / SGSC1412 / ATCC 700720) protein is Sensor histidine kinase RcsC.